The following is a 226-amino-acid chain: Isoprenyl transferase (226 aa).

Asp-12 is a catalytic residue. Residue Asp-12 coordinates Mg(2+). Substrate is bound by residues 13-16 (GNAR), Trp-17, Lys-25, His-29, and 57-59 (SSE). Asn-60 acts as the Proton acceptor in catalysis. Residues Trp-61, Arg-63, Arg-174, and 180–182 (RIS) contribute to the substrate site. Residue Glu-193 coordinates Mg(2+).

It belongs to the UPP synthase family. As to quaternary structure, homodimer. Mg(2+) serves as cofactor.

In terms of biological role, catalyzes the condensation of isopentenyl diphosphate (IPP) with allylic pyrophosphates generating different type of terpenoids. The polypeptide is Isoprenyl transferase (Rickettsia sibirica (strain ATCC VR-151 / 246)).